A 257-amino-acid polypeptide reads, in one-letter code: Cobalt transport protein CbiM (257 aa).

The first 33 residues, 1-33, serve as a signal peptide directing secretion; it reads MVKPTQAKRYASLGAIALLTTSLVVASPNPALA. Transmembrane regions (helical) follow at residues 39 to 59, 74 to 94, 117 to 137, 138 to 158, 171 to 191, and 214 to 234; these read GFLP…FLAW, SVLL…LKIP, LMAV…AHGG, LTTL…LAWL, AIAL…LTSL, and LFAV…VLVW.

The protein belongs to the CbiM family. As to quaternary structure, forms an energy-coupling factor (ECF) transporter complex composed of an ATP-binding protein (A component, CbiO), a transmembrane protein (T component, CbiQ) and 2 possible substrate-capture proteins (S components, CbiM and CbiN) of unknown stoichimetry.

Its subcellular location is the cell inner membrane. It functions in the pathway cofactor biosynthesis; adenosylcobalamin biosynthesis. In terms of biological role, part of the energy-coupling factor (ECF) transporter complex CbiMNOQ involved in cobalt import. This Thermosynechococcus vestitus (strain NIES-2133 / IAM M-273 / BP-1) protein is Cobalt transport protein CbiM.